The primary structure comprises 746 residues: WD repeat-containing protein 91 (746 aa).

Positions 183–215 form a coiled coil; the sequence is QRTNQVQEENEVLRQKLFALQAEIHRLKKEEQQ. Serine 256 is subject to Phosphoserine. Residues 265 to 278 show a composition bias toward low complexity; that stretch reads LLPQSKKSPSRLSP. The disordered stretch occupies residues 265–336; the sequence is LLPQSKKSPS…QHRQRRLQDH (72 aa). Residues 282–299 show a composition bias toward polar residues; it reads PPQTQSSAKKESFGSQTT. Residues serine 288 and serine 293 each carry the phosphoserine modification. WD repeat units lie at residues 405–444, 447–487, 514–554, 559–598, 601–640, 663–701, and 708–746; these read EHHS…QTKA, ISKS…NLCE, AASS…QQLQ, PEPI…CAMS, AHCG…LKVS, VQVP…KVLE, and GHRA…AHKV.

The protein belongs to the WD repeat WDR91 family. Interacts with WDR81; involved in early to late endosome cargo transport. Interacts with BECN1; negatively regulates the PI3 kinase/PI3K activity associated with endosomal membranes.

The protein resides in the early endosome membrane. Its subcellular location is the late endosome membrane. Its function is as follows. Functions as a negative regulator of the PI3 kinase/PI3K activity associated with endosomal membranes via BECN1, a core subunit of the PI3K complex. By modifying the phosphatidylinositol 3-phosphate/PtdInsP3 content of endosomal membranes may regulate endosome fusion, recycling, sorting and early to late endosome transport. It is for instance, required for the delivery of cargos like BST2/tetherin from early to late endosome and thereby participates indirectly to their degradation by the lysosome. May play a role in meiosis. This Bos taurus (Bovine) protein is WD repeat-containing protein 91.